We begin with the raw amino-acid sequence, 137 residues long: Large ribosomal subunit protein uL16c (137 aa).

Over residues 1-17 (MLSPKKTRFRRQHRGRM) the composition is skewed to basic residues. The interval 1–21 (MLSPKKTRFRRQHRGRMKGLS) is disordered.

This sequence belongs to the universal ribosomal protein uL16 family. In terms of assembly, part of the 50S ribosomal subunit.

Its subcellular location is the plastid. The polypeptide is Large ribosomal subunit protein uL16c (Cuscuta obtusiflora (Peruvian dodder)).